The following is a 298-amino-acid chain: MAQKVEAQGGKGANLWDDGSTHDAVTKIQLAAGIDGIQYVQFDYVKNGQPEQAPLRGTKGRVLPADPFVINHPDEHLVSVEGWYSPEGIIQGIKFISNKKTSDVIGSDEGTHFTLQVKDKKIIGFHGSAGGNLNSLGAYFAPLTTTTPLTPAKQLTAFGSDDGTVWDDGAYVGVKKVYVGQAQDGISAVKFVYDKSPEEVTGEEHGKSTLLGFEEFVLDYPSEYITAVDGTYDKIFGSDGSVITMLRFKTNKQTSPPFGLEAGTVFELKEEGHKIVGFHGRADVLLHKIGVHVRPLSN.

Position 2 is an N-acetylalanine (alanine 2). Jacalin-type lectin domains follow at residues 2–142 (AQKV…YFAP) and 152–295 (AKQL…HVRP). Serine 20 bears the Phosphoserine mark.

This sequence belongs to the jacalin lectin family. In terms of assembly, component of the PYK10 complex, at least composed of PYK10/BGLU23, BGLU21, BGLU22, JAL22, JAL23, PBP1/JAL30, PBP2/JAL31, JAL32, JAL33, JAL34, JAL35, GLL22 and GLL23. In terms of tissue distribution, expressed exclusively in roots.

Its subcellular location is the cytoplasm. In terms of biological role, inhibitor-type lectin that may regulate the correct polymerization of BGLU23/PYK10 upon tissue damage. Activates BGLU21, BGLU22 and BGLU23. The polypeptide is PYK10-binding protein 1 (PBP1) (Arabidopsis thaliana (Mouse-ear cress)).